The chain runs to 287 residues: Nucleotide-binding protein GM21_3387 (287 aa).

8-15 (GLSGSGKS) serves as a coordination point for ATP. Position 59–62 (59–62 (DIRS)) interacts with GTP.

It belongs to the RapZ-like family.

Displays ATPase and GTPase activities. This Geobacter sp. (strain M21) protein is Nucleotide-binding protein GM21_3387.